The following is a 154-amino-acid chain: Leghemoglobin-2 (154 aa).

In terms of domain architecture, Globin spans 3–151 (ALTESQAALV…LAIVIKKEMN (149 aa)). Ser-46 is a binding site for heme b. Position 46 is a phosphoserine (Ser-46). Residue His-64 coordinates O2. Residues Lys-67, His-98, and Lys-101 each contribute to the heme b site. A Nitrated tyrosine modification is found at Tyr-139.

The protein belongs to the plant globin family. As to quaternary structure, monomer. Post-translationally, nitrated in effective nodules and particularly in hypoxic conditions; this mechanism may play a protective role in the symbiosis by buffering toxic peroxynitrite NO(2)(-). Nitration level decrease during nodule senescence. Phosphorylation at Ser-46 disrupts the molecular environment of its porphyrin ring oxygen binding pocket, thus leading to a reduced oxygen consumption and to the delivery of oxygen O(2) to symbiosomes. Root nodules.

Its subcellular location is the cytoplasm. The protein localises to the cytosol. The protein resides in the nucleus. Its function is as follows. Leghemoglobin that reversibly binds oxygen O(2) through a pentacoordinated heme iron. In root nodules, facilitates the diffusion of oxygen to the bacteroids while preventing the bacterial nitrogenase from being inactivated by buffering dioxygen, nitric oxide and carbon monoxide, and promoting the formation of reactive oxygen species (ROS, e.g. H(2)O(2)). This role is essential for symbiotic nitrogen fixation (SNF). This chain is Leghemoglobin-2, found in Lupinus luteus (European yellow lupine).